Here is a 272-residue protein sequence, read N- to C-terminus: Putative phosphatase BU028/BU029 (272 aa).

The Nucleophile role is filled by Asp-8. Asp-8 contacts Mg(2+). Residue Leu-9 coordinates phosphate. Residue Asp-10 participates in Mg(2+) binding. Phosphate-binding positions include 42–43 (SG) and Lys-191. Asp-214 lines the Mg(2+) pocket. Residue Asn-217 coordinates phosphate.

This sequence belongs to the HAD-like hydrolase superfamily. Cof family. Mg(2+) is required as a cofactor.

This Buchnera aphidicola subsp. Acyrthosiphon pisum (strain APS) (Acyrthosiphon pisum symbiotic bacterium) protein is Putative phosphatase BU028/BU029.